The sequence spans 338 residues: Plasminogen (338 aa).

Positions cysteine 9 to cysteine 88 constitute a Kringle 5 domain. 9 cysteine pairs are disulfide-bonded: cysteine 9–cysteine 88, cysteine 30–cysteine 71, cysteine 59–cysteine 83, cysteine 95–cysteine 213, cysteine 105–cysteine 113, cysteine 135–cysteine 151, cysteine 227–cysteine 294, cysteine 257–cysteine 273, and cysteine 284–cysteine 312. In terms of domain architecture, Peptidase S1 spans isoleucine 109–glutamine 336. Residue serine 125 is modified to Phosphoserine. Active-site charge relay system residues include histidine 150 and aspartate 193. The Charge relay system role is filled by serine 288.

It belongs to the peptidase S1 family. Plasminogen subfamily. As to quaternary structure, interacts with CSPG4 and AMOT. Interacts (via the Kringle domains) with HRG; the interaction tethers PLG to the cell surface and enhances its activation. Interacts (via Kringle 4 domain) with ADA; the interaction stimulates PLG activation when in complex with DPP4. Angiostatin: Interacts with ATP5F1A; the interaction inhibits most of the angiogenic effects of angiostatin.

The protein localises to the secreted. The catalysed reaction is Preferential cleavage: Lys-|-Xaa &gt; Arg-|-Xaa, higher selectivity than trypsin. Converts fibrin into soluble products.. With respect to regulation, converted into plasmin by plasminogen activators, both plasminogen and its activator being bound to fibrin. Activated with catalytic amounts of streptokinase. Functionally, plasmin dissolves the fibrin of blood clots and acts as a proteolytic factor in a variety of other processes including embryonic development, tissue remodeling, tumor invasion, and inflammation. In ovulation, weakens the walls of the Graafian follicle. It activates the urokinase-type plasminogen activator, collagenases and several complement zymogens, such as C1, C4 and C5. Cleavage of fibronectin and laminin leads to cell detachment and apoptosis. Also cleaves fibrin, thrombospondin and von Willebrand factor. Its role in tissue remodeling and tumor invasion may be modulated by CSPG4. Binds to cells. The sequence is that of Plasminogen (PLG) from Equus caballus (Horse).